Reading from the N-terminus, the 355-residue chain is Ataxin-3 (355 aa).

Methionine 1 is covalently cross-linked (Peptide (Met-Gly) (interchain with G-Cter in ubiquitin)). A Josephin domain is found at 1–180 (MESIFHEKQE…DCEADQLLQM (180 aa)). Residue cysteine 14 is the Nucleophile of the active site. Histidine 119 functions as the Proton acceptor in the catalytic mechanism. Residue asparagine 134 is part of the active site. Lysine 200 participates in a covalent cross-link: Glycyl lysine isopeptide (Lys-Gly) (interchain with G-Cter in ubiquitin). A Phosphoserine modification is found at serine 219. UIM domains follow at residues 224 to 243 (EDED…IDME) and 244 to 263 (DEEA…SSRS). Residues 257–275 (MQGSSRSMCENSPQTSSPD) show a composition bias toward polar residues. A disordered region spans residues 257–355 (MQGSSRSMCE…KDNLKAERKK (99 aa)). Phosphoserine occurs at positions 268, 272, and 273. The span at 279 to 289 (EELRRRREAYF) shows a compositional bias: basic and acidic residues. Serine 321 is subject to Phosphoserine. The UIM 3 domain maps to 329 to 348 (SEEDMLRAAVTMSLETAKDN). The segment covering 344 to 355 (TAKDNLKAERKK) has biased composition (basic and acidic residues).

As to quaternary structure, interacts with STUB1/CHIP (when monoubiquitinated). Interacts with DNA repair proteins RAD23A and RAD23B. Interacts with BECN1 (via its poly-Gln domain). Interacts with PRKN, UBR2, VCP and tubulin. In terms of processing, monoubiquitinated by UBE2W, possibly leading to activate the deubiquitinating enzyme activity.

Its subcellular location is the nucleus matrix. It is found in the nucleus. The protein localises to the lysosome membrane. The catalysed reaction is Thiol-dependent hydrolysis of ester, thioester, amide, peptide and isopeptide bonds formed by the C-terminal Gly of ubiquitin (a 76-residue protein attached to proteins as an intracellular targeting signal).. In terms of biological role, deubiquitinating enzyme involved in protein homeostasis maintenance, transcription, cytoskeleton regulation, myogenesis and degradation of misfolded chaperone substrates. Binds long polyubiquitin chains and trims them, while it has weak or no activity against chains of 4 or less ubiquitins. Involved in degradation of misfolded chaperone substrates via its interaction with STUB1/CHIP: recruited to monoubiquitinated STUB1/CHIP, and restricts the length of ubiquitin chain attached to STUB1/CHIP substrates and preventing further chain extension. Interacts with key regulators of transcription and represses transcription: acts as a histone-binding protein that regulates transcription. Acts as a negative regulator of mTORC1 signaling in response to amino acid deprivation by mediating deubiquitination of RHEB, thereby promoting RHEB inactivation by the TSC-TBC complex. Regulates autophagy via the deubiquitination of 'Lys-402' of BECN1 leading to the stabilization of BECN1. The chain is Ataxin-3 (Atxn3) from Mus musculus (Mouse).